The sequence spans 255 residues: MGRIIRAQRKGKAGSVFGAHTHHRKGTPRFRALDYAERQGYVKGVVKEIIHDPGRGAPLARVVFKGLTQFKLDKQLFIAPEGMHTGQFVFAGKKATLTIGNILPIGKLPEGTIICNVEEKLGDCGAVARCSGNYATIVSHNPDEGVTRIKLPSGSKKNVSSLARAMIGIVAGGGRIDKPMLKAGRAFHKYRVKKNNWPKVRGVAMNPVEHPHGGGNHQHVGHATTTKRDDPAGKKVGLIAARRTGRLRGTKNISE.

Residues 211-235 (PHGGGNHQHVGHATTTKRDDPAGKK) are disordered.

This sequence belongs to the universal ribosomal protein uL2 family.

This chain is Large ribosomal subunit protein uL2 (rpl8), found in Dictyostelium discoideum (Social amoeba).